The chain runs to 339 residues: Phosphate acyltransferase (339 aa).

It belongs to the PlsX family. As to quaternary structure, homodimer. Probably interacts with PlsY.

It is found in the cytoplasm. The catalysed reaction is a fatty acyl-[ACP] + phosphate = an acyl phosphate + holo-[ACP]. It participates in lipid metabolism; phospholipid metabolism. Its function is as follows. Catalyzes the reversible formation of acyl-phosphate (acyl-PO(4)) from acyl-[acyl-carrier-protein] (acyl-ACP). This enzyme utilizes acyl-ACP as fatty acyl donor, but not acyl-CoA. The polypeptide is Phosphate acyltransferase (Methylococcus capsulatus (strain ATCC 33009 / NCIMB 11132 / Bath)).